The sequence spans 64 residues: Prokaryotic ubiquitin-like protein Pup (64 aa).

Residues 1-11 are compositionally biased toward basic and acidic residues; the sequence is MAQEQTKRGGG. The disordered stretch occupies residues 1-36; that stretch reads MAQEQTKRGGGGDDDDVTDLGGPAGQERREKLAEDT. Residues 21-58 are ARC ATPase binding; it reads GGPAGQERREKLAEDTDDLLDEIDDVLEENAEDFVRAY. Residues 24–52 adopt a coiled-coil conformation; sequence AGQERREKLAEDTDDLLDEIDDVLEENAE. Glutamine 64 carries the deamidated glutamine modification. Residue glutamine 64 forms an Isoglutamyl lysine isopeptide (Gln-Lys) (interchain with K-? in acceptor proteins) linkage.

The protein belongs to the prokaryotic ubiquitin-like protein family. In terms of assembly, strongly interacts with the proteasome-associated ATPase ARC through a hydrophobic interface; the interacting region of Pup lies in its C-terminal half. There is one Pup binding site per ARC hexamer ring. Is modified by deamidation of its C-terminal glutamine to glutamate by the deamidase Dop, a prerequisite to the subsequent pupylation process.

Its pathway is protein degradation; proteasomal Pup-dependent pathway. Its function is as follows. Protein modifier that is covalently attached to lysine residues of substrate proteins, thereby targeting them for proteasomal degradation. The tagging system is termed pupylation. The polypeptide is Prokaryotic ubiquitin-like protein Pup (Mycobacteroides abscessus (strain ATCC 19977 / DSM 44196 / CCUG 20993 / CIP 104536 / JCM 13569 / NCTC 13031 / TMC 1543 / L948) (Mycobacterium abscessus)).